Here is a 167-residue protein sequence, read N- to C-terminus: MYLQLKSKLENVLSYFFRKMSQGYDNYDDMYDQNGASPAPSQNEKPGKSGPGFVGIKFCPECNNMLYPREDKESRVLMYSCRNCEHREVAANPCIYVNKLVHEIDELTQIVGDIIHDPTLPKTEEHQCPVCGKSKAVFFQAQTKKAEEEMRLYYVCASQDCQHRWTE.

A disordered region spans residues 28–49 (DDMYDQNGASPAPSQNEKPGKS). Over residues 34–44 (NGASPAPSQNE) the composition is skewed to polar residues. Zn(2+)-binding residues include Cys59, Cys62, Cys81, Cys84, Cys128, Cys131, Cys156, and Cys161. A C4-type zinc finger spans residues 59–84 (CPECNNMLYPREDKESRVLMYSCRNC). A TFIIS-type zinc finger spans residues 124–166 (EEHQCPVCGKSKAVFFQAQTKKAEEEMRLYYVCASQDCQHRWT).

This sequence belongs to the archaeal RpoM/eukaryotic RPA12/RPB9/RPC11 RNA polymerase family. Component of the RNA polymerase II (Pol II) complex consisting of 12 subunits. As to expression, expressed in the soma and in the germline.

The protein resides in the nucleus. It is found in the nucleolus. In terms of biological role, DNA-dependent RNA polymerase catalyzes the transcription of DNA into RNA using the four ribonucleoside triphosphates as substrates. Component of RNA polymerase II which synthesizes mRNA precursors and many functional non-coding RNAs. Pol II is the central component of the basal RNA polymerase II transcription machinery. It is composed of mobile elements that move relative to each other. RPB9 is part of the upper jaw surrounding the central large cleft and thought to grab the incoming DNA template. Recruits ints-6, a component of the Integrator complex to PIWI-interacting RNA (piRNA) genes, to mediate Integrator complex-dependent cleavage of 3' ends of nascent transcripts upon RNA Pol II backtracking to terminate transcription and generate piRNA precursors. Promotes the biogenesis of secondary 22G-siRNAs (a class of 22 nucleotide siRNAs that possess a triphosphorylated guanine residue at the 5'-end). Involved in gene silencing mediated by a class of 21 nucleotide piRNAs that possess a uracil residue at the 5'-end (also called 21U-RNAs) and guide the Piwi protein prg-1 to its DNA targets for silencing. Plays a role in small RNA-directed transgenerational epigenetic inheritance (also called RNAe) over several generations. Not required for the transgenerational inheritance of exogenous small interfering RNAs (RNAi). May play a role in the silencing of the DNA transposable elements from the DNA transposon families, Chapaev-2 and CEMUDR1. This Caenorhabditis elegans protein is DNA-directed RNA polymerase II subunit rpb-9.